Here is a 155-residue protein sequence, read N- to C-terminus: Cathelicidin-1 (155 aa).

Residues 1–29 (METPRASLSLGRWSLWLLLLGLALPSASA) form the signal peptide. Q30 carries the pyrrolidone carboxylic acid modification. Positions 30–143 (QALSYREAVL…KQPWAPPQAA (114 aa)) are excised as a propeptide. 3 cysteine pairs are disulfide-bonded: C85–C96, C107–C124, and C146–C154.

The protein belongs to the cathelicidin family. Large granules of neutrophils.

It is found in the secreted. Potent microbicidal activity; active against S.aureus and E.coli. This is Cathelicidin-1 (CATHL1) from Bos taurus (Bovine).